Reading from the N-terminus, the 462-residue chain is Squalene synthase ERG9 (462 aa).

A helical membrane pass occupies residues 406–426; that stretch reads AVVLFGVVIAALVCISGLMLG.

It belongs to the phytoene/squalene synthase family. Requires Mg(2+) as cofactor.

The protein resides in the endoplasmic reticulum membrane. Its subcellular location is the microsome. It catalyses the reaction 2 (2E,6E)-farnesyl diphosphate + NADPH + H(+) = squalene + 2 diphosphate + NADP(+). It carries out the reaction 2 (2E,6E)-farnesyl diphosphate + NADH + H(+) = squalene + 2 diphosphate + NAD(+). It functions in the pathway terpene metabolism; lanosterol biosynthesis; lanosterol from farnesyl diphosphate: step 1/3. Its pathway is steroid metabolism; ergosterol biosynthesis. Its function is as follows. Squalene synthase; part of the third module of ergosterol biosynthesis pathway that includes the late steps of the pathway. ERG9 produces squalene from 2 farnesyl pyrophosphate moieties. The third module or late pathway involves the ergosterol synthesis itself through consecutive reactions that mainly occur in the endoplasmic reticulum (ER) membrane. Firstly, the squalene synthase ERG9 catalyzes the condensation of 2 farnesyl pyrophosphate moieties to form squalene, which is the precursor of all steroids. Squalene synthase is crucial for balancing the incorporation of farnesyl diphosphate (FPP) into sterol and nonsterol isoprene synthesis. Secondly, squalene is converted into lanosterol by the consecutive action of the squalene epoxidase ERG1 and the lanosterol synthase ERG7. Then, the delta(24)-sterol C-methyltransferase ERG6 methylates lanosterol at C-24 to produce eburicol. Eburicol is the substrate of the sterol 14-alpha demethylase encoded by CYP51A, CYP51B and CYP51C, to yield 4,4,24-trimethyl ergosta-8,14,24(28)-trienol. CYP51B encodes the enzyme primarily responsible for sterol 14-alpha-demethylation, and plays an essential role in ascospore formation. CYP51A encodes an additional sterol 14-alpha-demethylase, induced on ergosterol depletion and responsible for the intrinsic variation in azole sensitivity. The third CYP51 isoform, CYP51C, does not encode a sterol 14-alpha-demethylase, but is required for full virulence on host wheat ears. The C-14 reductase ERG24 then reduces the C14=C15 double bond which leads to 4,4-dimethylfecosterol. A sequence of further demethylations at C-4, involving the C-4 demethylation complex containing the C-4 methylsterol oxidases ERG25, the sterol-4-alpha-carboxylate 3-dehydrogenase ERG26 and the 3-keto-steroid reductase ERG27, leads to the production of fecosterol via 4-methylfecosterol. ERG28 has a role as a scaffold to help anchor ERG25, ERG26 and ERG27 to the endoplasmic reticulum. The C-8 sterol isomerase ERG2 then catalyzes the reaction which results in unsaturation at C-7 in the B ring of sterols and thus converts fecosterol to episterol. The sterol-C5-desaturases ERG3A and ERG3BB then catalyze the introduction of a C-5 double bond in the B ring to produce 5-dehydroepisterol. The C-22 sterol desaturases ERG5A and ERG5B further convert 5-dehydroepisterol into ergosta-5,7,22,24(28)-tetraen-3beta-ol by forming the C-22(23) double bond in the sterol side chain. Finally, ergosta-5,7,22,24(28)-tetraen-3beta-ol is substrate of the C-24(28) sterol reductase ERG4 to produce ergosterol. The sequence is that of Squalene synthase ERG9 from Gibberella zeae (strain ATCC MYA-4620 / CBS 123657 / FGSC 9075 / NRRL 31084 / PH-1) (Wheat head blight fungus).